Here is a 96-residue protein sequence, read N- to C-terminus: UPF0235 protein YggU (96 aa).

Belongs to the UPF0235 family.

This Escherichia coli (strain K12 / MC4100 / BW2952) protein is UPF0235 protein YggU.